A 385-amino-acid chain; its full sequence is FAD-dependent monooxygenase verC2 (385 aa).

FAD-binding residues include R27, D227, and A240. A glycan (N-linked (GlcNAc...) asparagine) is linked at N320. Residues 365–385 (WKTTIMFIALLTIVVLIYSFI) form a helical membrane-spanning segment.

Belongs to the paxM FAD-dependent monooxygenase family. FAD is required as a cofactor.

Its subcellular location is the membrane. It participates in secondary metabolite biosynthesis; terpenoid biosynthesis. It functions in the pathway mycotoxin biosynthesis. In terms of biological role, FAD-dependent monooxygenase; part of the gene cluster that mediates the biosynthesis of the neurotoxin verrucosidin, a methylated alpha-pyrone polyketide that inhibits oxidative phosphorylation in mitochondria and thereby causes neurological diseases. The carbon backbone of verrucosidin is synthesized by the HR-PKS verA, and further modified by the other verrucodidin cluster enzymes. This chain is FAD-dependent monooxygenase verC2, found in Penicillium polonicum.